The primary structure comprises 104 residues: Flagellar hook-basal body complex protein FliE (104 aa).

The protein belongs to the FliE family.

It localises to the bacterial flagellum basal body. In Pectobacterium atrosepticum (strain SCRI 1043 / ATCC BAA-672) (Erwinia carotovora subsp. atroseptica), this protein is Flagellar hook-basal body complex protein FliE.